The chain runs to 737 residues: Palmitoyltransferase AKR1 (737 aa).

Residues 1-47 (MKQIDSEDSITVPNDTPEDNSASSMQPVMSNLSIEEHQSENEPIEQE) form a disordered region. The Cytoplasmic portion of the chain corresponds to 1–304 (MKQIDSEDSI…VYFKKSLHTK (304 aa)). Over residues 9-33 (SITVPNDTPEDNSASSMQPVMSNLS) the composition is skewed to polar residues. ANK repeat units follow at residues 54-84 (PLLS…DLKH), 90-119 (ERVS…DVNF), 124-153 (LNAT…DPSV), 157-190 (QGFN…DIDC), 194-223 (NGRT…SVKA), and 227-256 (GGFT…DFFQ). 2 helical membrane passes run 305–325 (LVTF…FASI) and 326–346 (HPIF…YTLK). Topologically, residues 347–364 (KYVIPAYAQRNTRQSFLK) are cytoplasmic. A helical transmembrane segment spans residues 365-385 (TPFLAGVFSGSVFWASYTWLT). Over 386–396 (RIMPLTLIEEP) the chain is Lumenal. The chain crosses the membrane as a helical span at residues 397–417 (ITNLLFFAGVVLLASLFVKLV). Over 418–493 (RSDPGLIPEE…YNDIGLRNHK (76 aa)) the chain is Cytoplasmic. The 51-residue stretch at 450–500 (HFCISTWVRKPIRSKFSNFSRALVTRFDHFCPWIYNDIGLRNHKTFLFFIL) folds into the DHHC domain. Cys-480 serves as the catalytic S-palmitoyl cysteine intermediate. The helical transmembrane segment at 494-514 (TFLFFILCLETCIFVFLKLCM) threads the bilayer. Topologically, residues 515 to 547 (EYFDVLEDTFEDDYDLNCGIFGEDLCAGFFFDT) are lumenal. A helical membrane pass occupies residues 548–568 (FTFLVLAWTCFQGIWVGFLTF). Topologically, residues 569 to 737 (VQLFQTAKGV…ERHYLAEEIV (169 aa)) are cytoplasmic.

Belongs to the DHHC palmitoyltransferase family. AKR/ZDHHC17 subfamily.

It localises to the early endosome membrane. The protein localises to the golgi apparatus membrane. It carries out the reaction L-cysteinyl-[protein] + hexadecanoyl-CoA = S-hexadecanoyl-L-cysteinyl-[protein] + CoA. In terms of biological role, palmitoyltransferase specific for casein kinase 1. The chain is Palmitoyltransferase AKR1 (AKR1) from Lachancea kluyveri (strain ATCC 58438 / CBS 3082 / BCRC 21498 / NBRC 1685 / JCM 7257 / NCYC 543 / NRRL Y-12651) (Yeast).